The chain runs to 143 residues: D-aminoacyl-tRNA deacylase (143 aa).

A Gly-cisPro motif, important for rejection of L-amino acids motif is present at residues 135–136 (GP).

It belongs to the DTD family. As to quaternary structure, homodimer.

The protein resides in the cytoplasm. It carries out the reaction glycyl-tRNA(Ala) + H2O = tRNA(Ala) + glycine + H(+). The catalysed reaction is a D-aminoacyl-tRNA + H2O = a tRNA + a D-alpha-amino acid + H(+). Functionally, an aminoacyl-tRNA editing enzyme that deacylates mischarged D-aminoacyl-tRNAs. Also deacylates mischarged glycyl-tRNA(Ala), protecting cells against glycine mischarging by AlaRS. Acts via tRNA-based rather than protein-based catalysis; rejects L-amino acids rather than detecting D-amino acids in the active site. By recycling D-aminoacyl-tRNA to D-amino acids and free tRNA molecules, this enzyme counteracts the toxicity associated with the formation of D-aminoacyl-tRNA entities in vivo and helps enforce protein L-homochirality. The protein is D-aminoacyl-tRNA deacylase of Mycolicibacterium smegmatis (strain ATCC 700084 / mc(2)155) (Mycobacterium smegmatis).